Reading from the N-terminus, the 98-residue chain is MKIDQAAVAGTLESGDVMIRIAPLDTQDIDLQINSSVEKQFGDAIRATILDVLARYNVRGVQLNVDDKGALDCILRARLEALLARASGIPALPWEDRQ.

At S14 the chain carries O-(phosphoribosyl dephospho-coenzyme A)serine.

Belongs to the CitD family. Oligomer with a subunit composition of (alpha,beta,gamma)6.

It localises to the cytoplasm. In terms of biological role, covalent carrier of the coenzyme of citrate lyase. The chain is Citrate lyase acyl carrier protein from Citrobacter koseri (strain ATCC BAA-895 / CDC 4225-83 / SGSC4696).